The chain runs to 39 residues: Photosystem II reaction center protein L (39 aa).

Residues 16 to 37 (RTSLYLGLLLVAVLGILFSSYF) traverse the membrane as a helical segment.

Belongs to the PsbL family. PSII is composed of 1 copy each of membrane proteins PsbA, PsbB, PsbC, PsbD, PsbE, PsbF, PsbH, PsbI, PsbJ, PsbK, PsbL, PsbM, PsbT, PsbX, PsbY, PsbZ, Psb30/Ycf12, peripheral proteins PsbO, CyanoQ (PsbQ), PsbU, PsbV and a large number of cofactors. It forms dimeric complexes.

It is found in the cellular thylakoid membrane. In terms of biological role, one of the components of the core complex of photosystem II (PSII). PSII is a light-driven water:plastoquinone oxidoreductase that uses light energy to abstract electrons from H(2)O, generating O(2) and a proton gradient subsequently used for ATP formation. It consists of a core antenna complex that captures photons, and an electron transfer chain that converts photonic excitation into a charge separation. This subunit is found at the monomer-monomer interface and is required for correct PSII assembly and/or dimerization. Required for PSII activity, at least in part due to its effects on PSII assembly. May make specific contact(s) with lipids. The polypeptide is Photosystem II reaction center protein L (Synechocystis sp. (strain ATCC 27184 / PCC 6803 / Kazusa)).